The sequence spans 399 residues: Tyrosine--tRNA ligase (399 aa).

The 'HIGH' region signature appears at 42-51 (PTAPDLHLGH). The 'KMSKS' region motif lies at 226–230 (KMSKS). Lys229 is a binding site for ATP. Positions 336–396 (MPIAAVLNKA…GKKAFARITL (61 aa)) constitute an S4 RNA-binding domain.

The protein belongs to the class-I aminoacyl-tRNA synthetase family. TyrS type 2 subfamily. Homodimer.

Its subcellular location is the cytoplasm. It carries out the reaction tRNA(Tyr) + L-tyrosine + ATP = L-tyrosyl-tRNA(Tyr) + AMP + diphosphate + H(+). Catalyzes the attachment of tyrosine to tRNA(Tyr) in a two-step reaction: tyrosine is first activated by ATP to form Tyr-AMP and then transferred to the acceptor end of tRNA(Tyr). This is Tyrosine--tRNA ligase from Pseudomonas fluorescens (strain Pf0-1).